Consider the following 307-residue polypeptide: Ribonuclease Z (307 aa).

Positions 63, 65, 67, 68, 143, 213, and 271 each coordinate Zn(2+). Asp-67 acts as the Proton acceptor in catalysis.

It belongs to the RNase Z family. As to quaternary structure, homodimer. Zn(2+) is required as a cofactor.

It carries out the reaction Endonucleolytic cleavage of RNA, removing extra 3' nucleotides from tRNA precursor, generating 3' termini of tRNAs. A 3'-hydroxy group is left at the tRNA terminus and a 5'-phosphoryl group is left at the trailer molecule.. Its function is as follows. Zinc phosphodiesterase, which displays some tRNA 3'-processing endonuclease activity. Probably involved in tRNA maturation, by removing a 3'-trailer from precursor tRNA. This Lactococcus lactis subsp. cremoris (strain MG1363) protein is Ribonuclease Z.